Reading from the N-terminus, the 545-residue chain is MNGIKHIFITGGVVSSIGKGLTAASLGSLLTMRGLKVFIKKLDPYLNVDPGTMNPLQHGEVFITEDGAETDLDVGHYERFLDVDLDRTANVTTGQVYSKVITLERTGRYLGETVQVIPHITDEIKRRIRLAPDDIDVIITEIGGTVGDIESQPFIEAARQIRREVGRENCCFIHVSLVPFLESAGEQKTKPTQHSVAILRAAGIQPDALVLRSDKPISSANQKKIALMCDVSAVVNAVTVPNIYEIPCVLNQHGLDKFVIKHLDLEAGEIDWSYWDDVLDAIENNRSEIEIAIIGKYTGLPDAYISVIEALRAGGFESKTKVNIKWVDSDDENLEDQLENINGACIPGGFGIRGIEGLIKAIRICREREIPTLGICLGMQCMVIEYARHVVGMHGASSTEFTDDTQWPVVTTMLEQRDILIDDQFGGTMRLGSYRAVLSVGSLAASLYGTTDIHERHRHRYEVNNGYAQRLVERGLIVSGRNTEQDLIEFIELDRKDHPFYIGTQAHPECKSRPKRPHPLFKGLVAAALARKEIAEFNSGKTVLQ.

The amidoligase domain stretch occupies residues 1 to 265 (MNGIKHIFIT…DKFVIKHLDL (265 aa)). Ser15 contributes to the CTP binding site. Ser15 serves as a coordination point for UTP. Residues 16–21 (SIGKGL) and Asp73 each bind ATP. Mg(2+) contacts are provided by Asp73 and Glu141. Residues 148 to 150 (DIE), 188 to 193 (KTKPTQ), and Lys224 each bind CTP. Residues 188–193 (KTKPTQ) and Lys224 each bind UTP. The Glutamine amidotransferase type-1 domain occupies 290–534 (EIAIIGKYTG…VAAALARKEI (245 aa)). Position 349 (Gly349) interacts with L-glutamine. Cys376 serves as the catalytic Nucleophile; for glutamine hydrolysis. L-glutamine is bound by residues 377-380 (LGMQ), Glu400, and Arg460. Active-site residues include His507 and Glu509.

Belongs to the CTP synthase family. In terms of assembly, homotetramer.

The catalysed reaction is UTP + L-glutamine + ATP + H2O = CTP + L-glutamate + ADP + phosphate + 2 H(+). The enzyme catalyses L-glutamine + H2O = L-glutamate + NH4(+). It catalyses the reaction UTP + NH4(+) + ATP = CTP + ADP + phosphate + 2 H(+). The protein operates within pyrimidine metabolism; CTP biosynthesis via de novo pathway; CTP from UDP: step 2/2. With respect to regulation, allosterically activated by GTP, when glutamine is the substrate; GTP has no effect on the reaction when ammonia is the substrate. The allosteric effector GTP functions by stabilizing the protein conformation that binds the tetrahedral intermediate(s) formed during glutamine hydrolysis. Inhibited by the product CTP, via allosteric rather than competitive inhibition. In terms of biological role, catalyzes the ATP-dependent amination of UTP to CTP with either L-glutamine or ammonia as the source of nitrogen. Regulates intracellular CTP levels through interactions with the four ribonucleotide triphosphates. This Tropheryma whipplei (strain TW08/27) (Whipple's bacillus) protein is CTP synthase.